A 513-amino-acid polypeptide reads, in one-letter code: ATP synthase subunit alpha (513 aa).

An ATP-binding site is contributed by 169 to 176; that stretch reads GDRQTGKT.

It belongs to the ATPase alpha/beta chains family. As to quaternary structure, F-type ATPases have 2 components, CF(1) - the catalytic core - and CF(0) - the membrane proton channel. CF(1) has five subunits: alpha(3), beta(3), gamma(1), delta(1), epsilon(1). CF(0) has three main subunits: a(1), b(2) and c(9-12). The alpha and beta chains form an alternating ring which encloses part of the gamma chain. CF(1) is attached to CF(0) by a central stalk formed by the gamma and epsilon chains, while a peripheral stalk is formed by the delta and b chains.

The protein localises to the cell inner membrane. It catalyses the reaction ATP + H2O + 4 H(+)(in) = ADP + phosphate + 5 H(+)(out). Functionally, produces ATP from ADP in the presence of a proton gradient across the membrane. The alpha chain is a regulatory subunit. The chain is ATP synthase subunit alpha from Cronobacter sakazakii (strain ATCC BAA-894) (Enterobacter sakazakii).